The sequence spans 97 residues: Small ribosomal subunit protein uS19 (97 aa).

Residues 74 to 97 (FSPTRRFGGHPDKKAVKGKIEKQG) are disordered. Basic and acidic residues predominate over residues 82 to 97 (GHPDKKAVKGKIEKQG).

The protein belongs to the universal ribosomal protein uS19 family.

Functionally, protein S19 forms a complex with S13 that binds strongly to the 16S ribosomal RNA. This chain is Small ribosomal subunit protein uS19, found in Petrotoga mobilis (strain DSM 10674 / SJ95).